The chain runs to 436 residues: Adenylosuccinate synthetase (436 aa).

GTP contacts are provided by residues 13 to 19 (GDEGKGK) and 41 to 43 (GHT). Catalysis depends on aspartate 14, which acts as the Proton acceptor. Residues aspartate 14 and glycine 41 each coordinate Mg(2+). IMP-binding positions include 14–17 (DEGK), 39–42 (NAGH), threonine 131, arginine 145, glutamine 226, threonine 241, and arginine 309. The active-site Proton donor is histidine 42. 305–311 (TVTGRKR) is a binding site for substrate. Residues arginine 311, 337–339 (KLD), and 419–421 (STG) contribute to the GTP site.

This sequence belongs to the adenylosuccinate synthetase family. In terms of assembly, homodimer. Mg(2+) is required as a cofactor.

It localises to the cytoplasm. The catalysed reaction is IMP + L-aspartate + GTP = N(6)-(1,2-dicarboxyethyl)-AMP + GDP + phosphate + 2 H(+). It participates in purine metabolism; AMP biosynthesis via de novo pathway; AMP from IMP: step 1/2. Its function is as follows. Plays an important role in the de novo pathway of purine nucleotide biosynthesis. Catalyzes the first committed step in the biosynthesis of AMP from IMP. The polypeptide is Adenylosuccinate synthetase (Aromatoleum aromaticum (strain DSM 19018 / LMG 30748 / EbN1) (Azoarcus sp. (strain EbN1))).